The sequence spans 759 residues: Phosphoribosylformylglycinamidine synthase subunit PurL (759 aa).

Residue H46 is part of the active site. ATP contacts are provided by Y49 and K88. Residue E90 coordinates Mg(2+). Substrate contacts are provided by residues 91–94 (SHNH) and R113. H92 serves as the catalytic Proton acceptor. D114 contacts Mg(2+). Q237 contributes to the substrate binding site. Position 265 (D265) interacts with Mg(2+). 309–311 (ESQ) is a substrate binding site. D498 and G535 together coordinate ATP. N536 contributes to the Mg(2+) binding site. S538 contacts substrate.

This sequence belongs to the FGAMS family. In terms of assembly, monomer. Part of the FGAM synthase complex composed of 1 PurL, 1 PurQ and 2 PurS subunits.

It localises to the cytoplasm. It carries out the reaction N(2)-formyl-N(1)-(5-phospho-beta-D-ribosyl)glycinamide + L-glutamine + ATP + H2O = 2-formamido-N(1)-(5-O-phospho-beta-D-ribosyl)acetamidine + L-glutamate + ADP + phosphate + H(+). The protein operates within purine metabolism; IMP biosynthesis via de novo pathway; 5-amino-1-(5-phospho-D-ribosyl)imidazole from N(2)-formyl-N(1)-(5-phospho-D-ribosyl)glycinamide: step 1/2. Functionally, part of the phosphoribosylformylglycinamidine synthase complex involved in the purines biosynthetic pathway. Catalyzes the ATP-dependent conversion of formylglycinamide ribonucleotide (FGAR) and glutamine to yield formylglycinamidine ribonucleotide (FGAM) and glutamate. The FGAM synthase complex is composed of three subunits. PurQ produces an ammonia molecule by converting glutamine to glutamate. PurL transfers the ammonia molecule to FGAR to form FGAM in an ATP-dependent manner. PurS interacts with PurQ and PurL and is thought to assist in the transfer of the ammonia molecule from PurQ to PurL. In Anaeromyxobacter sp. (strain K), this protein is Phosphoribosylformylglycinamidine synthase subunit PurL.